Reading from the N-terminus, the 270-residue chain is 3-phenylpropionate-dihydrodiol/cinnamic acid-dihydrodiol dehydrogenase (270 aa).

10-34 (FITGGGSGLGLALVERFIEEGAQVA) lines the NAD(+) pocket. Substrate is bound at residue Ser143. Tyr156 functions as the Proton acceptor in the catalytic mechanism.

Belongs to the short-chain dehydrogenases/reductases (SDR) family.

It carries out the reaction 3-(cis-5,6-dihydroxycyclohexa-1,3-dien-1-yl)propanoate + NAD(+) = 3-(2,3-dihydroxyphenyl)propanoate + NADH + H(+). The enzyme catalyses (2E)-3-(cis-5,6-dihydroxycyclohexa-1,3-dien-1-yl)prop-2-enoate + NAD(+) = (2E)-3-(2,3-dihydroxyphenyl)prop-2-enoate + NADH + H(+). Its pathway is aromatic compound metabolism; 3-phenylpropanoate degradation. Functionally, converts 3-phenylpropionate-dihydrodiol (PP-dihydrodiol) and cinnamic acid-dihydrodiol (CI-dihydrodiol) into 3-(2,3-dihydroxylphenyl)propanoic acid (DHPP) and 2,3-dihydroxicinnamic acid (DHCI), respectively. This Escherichia coli (strain ATCC 8739 / DSM 1576 / NBRC 3972 / NCIMB 8545 / WDCM 00012 / Crooks) protein is 3-phenylpropionate-dihydrodiol/cinnamic acid-dihydrodiol dehydrogenase.